Reading from the N-terminus, the 306-residue chain is Ribosomal protein L11 methyltransferase (306 aa).

The S-adenosyl-L-methionine site is built by threonine 154, glycine 179, aspartate 201, and asparagine 242.

The protein belongs to the methyltransferase superfamily. PrmA family.

It localises to the cytoplasm. It carries out the reaction L-lysyl-[protein] + 3 S-adenosyl-L-methionine = N(6),N(6),N(6)-trimethyl-L-lysyl-[protein] + 3 S-adenosyl-L-homocysteine + 3 H(+). Methylates ribosomal protein L11. The sequence is that of Ribosomal protein L11 methyltransferase from Xanthomonas axonopodis pv. citri (strain 306).